The primary structure comprises 213 residues: uncharacterized protein (213 aa).

S-adenosyl-L-methionine is bound by residues G53, E74, and D97.

This sequence belongs to the methyltransferase superfamily. YrrT family.

In terms of biological role, could be a S-adenosyl-L-methionine-dependent methyltransferase. This is an uncharacterized protein from Geobacillus sp. (strain WCH70).